The chain runs to 110 residues: U9-agatoxin-Ao1a (110 aa).

Positions 1 to 17 (MKLLLAIAGLFLVQTLA) are cleaved as a signal peptide. A propeptide spanning residues 18–38 (EDVRAHEESSFLAAVAPEEQR) is cleaved from the precursor. Disulfide bonds link Cys40/Cys54, Cys47/Cys60, Cys51/Cys87, Cys53/Cys72, and Cys62/Cys70.

This sequence belongs to the neurotoxin 37 family. As to expression, expressed by the venom gland.

Its subcellular location is the secreted. The chain is U9-agatoxin-Ao1a from Agelena orientalis (Funnel-web spider).